A 190-amino-acid polypeptide reads, in one-letter code: Lipid A acyltransferase PagP (190 aa).

The signal sequence occupies residues 1–29; the sequence is MYVAMIIRKYFLIIALLLMPWLAIPSVSA. Residues His62, Asp105, and Ser106 contribute to the active site.

It belongs to the lipid A palmitoyltransferase family. As to quaternary structure, homodimer.

It localises to the cell outer membrane. It carries out the reaction a lipid A + a 1,2-diacyl-sn-glycero-3-phosphocholine = a hepta-acyl lipid A + a 2-acyl-sn-glycero-3-phosphocholine. The enzyme catalyses a lipid IVA + a 1,2-diacyl-sn-glycero-3-phosphocholine = a lipid IVB + a 2-acyl-sn-glycero-3-phosphocholine. It catalyses the reaction a lipid IIA + a 1,2-diacyl-sn-glycero-3-phosphocholine = a lipid IIB + a 2-acyl-sn-glycero-3-phosphocholine. Its function is as follows. Transfers a fatty acid residue from the sn-1 position of a phospholipid to the N-linked hydroxyfatty acid chain on the proximal unit of lipid A or its precursors. Required for resistance to cationic antimicrobial peptides (CAMPs). Modifications of lipid A with an acyl chain allow to evade host immune defenses by resisting antimicrobial peptides and attenuating the inflammatory response to infection triggered by lipopolysaccharide through the Toll-like receptor 4 (TLR4) signal transduction pathway. The polypeptide is Lipid A acyltransferase PagP (Salmonella typhimurium (strain LT2 / SGSC1412 / ATCC 700720)).